The following is a 208-amino-acid chain: Ribosomal RNA large subunit methyltransferase E (208 aa).

S-adenosyl-L-methionine is bound by residues G63, W65, D83, D99, and D124. K164 (proton acceptor) is an active-site residue.

This sequence belongs to the class I-like SAM-binding methyltransferase superfamily. RNA methyltransferase RlmE family.

The protein resides in the cytoplasm. It catalyses the reaction uridine(2552) in 23S rRNA + S-adenosyl-L-methionine = 2'-O-methyluridine(2552) in 23S rRNA + S-adenosyl-L-homocysteine + H(+). In terms of biological role, specifically methylates the uridine in position 2552 of 23S rRNA at the 2'-O position of the ribose in the fully assembled 50S ribosomal subunit. This chain is Ribosomal RNA large subunit methyltransferase E, found in Salmonella typhi.